We begin with the raw amino-acid sequence, 772 residues long: Carnitine O-palmitoyltransferase 1, muscle isoform (772 aa).

Topologically, residues 1–47 (MAEAHQAVAFQFTVTPDGVDFRLSREALRHIYLSGINSWKKRLIRIK) are cytoplasmic. The helical transmembrane segment at 48-73 (NGILRGVYPGSPTSWLVVVMATVGSN) threads the bilayer. Over 74–102 (YCKVDISMGLVHCIQRCLPTRYGSYGTPQ) the chain is Mitochondrial intermembrane. A helical transmembrane segment spans residues 103–122 (TETLLSMVIFSTGVWATGIF). Over 123-772 (LFRQTLKLLL…DLFKISKTDS (650 aa)) the chain is Cytoplasmic. Residue H473 is the Proton acceptor of the active site. 555 to 567 (GKGLIKKCRTSPD) contacts CoA. The (R)-carnitine site is built by Y589 and T602.

Belongs to the carnitine/choline acetyltransferase family. High expression in heart, skeletal muscle and brown adipose tissue. Also expressed in white adipose tissue, but not in liver.

The protein localises to the mitochondrion outer membrane. It catalyses the reaction (R)-carnitine + hexadecanoyl-CoA = O-hexadecanoyl-(R)-carnitine + CoA. The protein operates within lipid metabolism; fatty acid beta-oxidation. Catalyzes the transfer of the acyl group of long-chain fatty acid-CoA conjugates onto carnitine, an essential step for the mitochondrial uptake of long-chain fatty acids and their subsequent beta-oxidation in the mitochondrion. This Rattus norvegicus (Rat) protein is Carnitine O-palmitoyltransferase 1, muscle isoform (Cpt1b).